Here is a 664-residue protein sequence, read N- to C-terminus: SPARC-like protein 1 (664 aa).

A signal peptide spans M1 to A16. The tract at residues S25–T34 is O-glycosylated at one additional site. The tract at residues S28–D360 is disordered. O-linked (GalNAc...) threonine glycosylation is found at T31 and T40. An O-linked (GalNAc...) serine glycan is attached at S44. A compositionally biased stretch (basic and acidic residues) spans D62 to S84. Phosphoserine is present on residues S76, S84, and S92. The span at A85–E94 shows a compositional bias: polar residues. Basic and acidic residues predominate over residues G96–G105. Residue T116 is glycosylated (O-linked (GalNAc...) threonine). Residues L120–E136 show a composition bias toward basic and acidic residues. Polar residues predominate over residues S146 to S156. N169 carries an N-linked (GlcNAc...) asparagine glycan. The segment covering Y170–K180 has biased composition (basic residues). S171 is modified (phosphoserine). N176 and N196 each carry an N-linked (GlcNAc...) asparagine glycan. A compositionally biased stretch (polar residues) spans Q188–N199. The span at D216–E235 shows a compositional bias: basic and acidic residues. 2 stretches are compositionally biased toward acidic residues: residues D236–D248 and D259–N280. S272 is subject to Phosphoserine. N-linked (GlcNAc...) asparagine glycosylation is present at N280. A compositionally biased stretch (basic and acidic residues) spans S306 to V316. Residue T331 is glycosylated (O-linked (GalNAc...) threonine). The span at D339 to G349 shows a compositional bias: acidic residues. S358 and S365 each carry phosphoserine. Residues E388–R426 form a disordered region. T398 is a glycosylation site (O-linked (GalNAc...) threonine). The span at P401 to E411 shows a compositional bias: basic and acidic residues. Residue N412 is glycosylated (N-linked (GlcNAc...) asparagine). The residue at position 420 (S420) is a Phosphoserine. The Follistatin-like domain occupies S432–C454. Intrachain disulfides connect C433-C444, C438-C454, C456-C490, C462-C483, C472-C509, C515-C626, and C634-C650. The Kazal-like domain maps to G450–S511. N-linked (GlcNAc...) asparagine glycosylation is present at N476. The region spanning P622–D657 is the EF-hand domain. 5 residues coordinate Ca(2+): D635, N637, D639, H641, and E646.

It belongs to the SPARC family. Post-translationally, N- and O-glycosylated. O-glycosylated with a core 1 or possibly core 8 glycan. Highly expressed in lymph node, brain, heart, lung, skeletal muscle, ovary, small intestine, and colon, with lower levels in placenta, pancreas, testis, spleen, and thymus, and no expression in kidney, liver, and peripheral blood leukocytes.

The protein localises to the secreted. Its subcellular location is the extracellular space. It is found in the extracellular matrix. This Homo sapiens (Human) protein is SPARC-like protein 1 (SPARCL1).